The chain runs to 88 residues: UPF0147 protein Ta0600 (88 aa).

Belongs to the UPF0147 family.

In Thermoplasma acidophilum (strain ATCC 25905 / DSM 1728 / JCM 9062 / NBRC 15155 / AMRC-C165), this protein is UPF0147 protein Ta0600.